Here is a 429-residue protein sequence, read N- to C-terminus: Glucose-6-phosphate isomerase (429 aa).

E282 serves as the catalytic Proton donor. Catalysis depends on residues H303 and K418.

Belongs to the GPI family.

It localises to the cytoplasm. It catalyses the reaction alpha-D-glucose 6-phosphate = beta-D-fructose 6-phosphate. The protein operates within carbohydrate biosynthesis; gluconeogenesis. It participates in carbohydrate degradation; glycolysis; D-glyceraldehyde 3-phosphate and glycerone phosphate from D-glucose: step 2/4. In terms of biological role, catalyzes the reversible isomerization of glucose-6-phosphate to fructose-6-phosphate. The polypeptide is Glucose-6-phosphate isomerase (Mesomycoplasma hyopneumoniae (strain 7448) (Mycoplasma hyopneumoniae)).